Reading from the N-terminus, the 250-residue chain is Phosphoribosylaminoimidazole-succinocarboxamide synthase (250 aa).

It belongs to the SAICAR synthetase family.

It carries out the reaction 5-amino-1-(5-phospho-D-ribosyl)imidazole-4-carboxylate + L-aspartate + ATP = (2S)-2-[5-amino-1-(5-phospho-beta-D-ribosyl)imidazole-4-carboxamido]succinate + ADP + phosphate + 2 H(+). It participates in purine metabolism; IMP biosynthesis via de novo pathway; 5-amino-1-(5-phospho-D-ribosyl)imidazole-4-carboxamide from 5-amino-1-(5-phospho-D-ribosyl)imidazole-4-carboxylate: step 1/2. The polypeptide is Phosphoribosylaminoimidazole-succinocarboxamide synthase (Bifidobacterium adolescentis (strain ATCC 15703 / DSM 20083 / NCTC 11814 / E194a)).